The sequence spans 636 residues: Poly(3-hydroxyalkanoate) polymerase subunit PhaC (636 aa).

Disordered stretches follow at residues 1–38 (MYNKRIKRVLPPEEMVTDSKQESGGQKNGDKTGFDATD) and 129–152 (QGTRGMQGEPLPPEPDTRKDKRFS). Positions 143-152 (PDTRKDKRFS) are enriched in basic and acidic residues. The active site involves C373.

Belongs to the PHA/PHB synthase family. Type I PhaC subfamily.

It is found in the cytoplasm. It carries out the reaction (3R)-3-hydroxybutanoyl-CoA + [(3R)-hydroxybutanoate](n) = [(3R)-hydroxybutanoate](n+1) + CoA. The protein operates within biopolymer metabolism; poly-(R)-3-hydroxybutanoate biosynthesis. Polymerizes D(-)-3-hydroxybutyryl-CoA to create PHB which consists of thousands of hydroxybutyrate molecules linked end to end. PHB serves as an intracellular energy reserve material when cells grow under conditions of nutrient limitation. This chain is Poly(3-hydroxyalkanoate) polymerase subunit PhaC, found in Rhizobium etli (strain ATCC 51251 / DSM 11541 / JCM 21823 / NBRC 15573 / CFN 42).